The chain runs to 338 residues: Holliday junction branch migration complex subunit RuvB (338 aa).

The interval 1–181 is large ATPase domain (RuvB-L); the sequence is MEERILTQNF…FGVINRLDYY (181 aa). Residues Leu20, Arg21, Gly62, Lys65, Thr66, Thr67, 128 to 130, Arg171, Tyr181, and Arg218 contribute to the ATP site; that span reads EDF. Thr66 contributes to the Mg(2+) binding site. The segment at 182–252 is small ATPAse domain (RuvB-S); sequence SVEELKEIIK…TANIALNMLG (71 aa). Positions 255-338 are head domain (RuvB-H); that stretch reads EMGLEEIDRK…YVEQRRIEDV (84 aa). Residues Arg310 and Arg315 each coordinate DNA.

This sequence belongs to the RuvB family. As to quaternary structure, homohexamer. Forms an RuvA(8)-RuvB(12)-Holliday junction (HJ) complex. HJ DNA is sandwiched between 2 RuvA tetramers; dsDNA enters through RuvA and exits via RuvB. An RuvB hexamer assembles on each DNA strand where it exits the tetramer. Each RuvB hexamer is contacted by two RuvA subunits (via domain III) on 2 adjacent RuvB subunits; this complex drives branch migration. In the full resolvosome a probable DNA-RuvA(4)-RuvB(12)-RuvC(2) complex forms which resolves the HJ.

Its subcellular location is the cytoplasm. It catalyses the reaction ATP + H2O = ADP + phosphate + H(+). In terms of biological role, the RuvA-RuvB-RuvC complex processes Holliday junction (HJ) DNA during genetic recombination and DNA repair, while the RuvA-RuvB complex plays an important role in the rescue of blocked DNA replication forks via replication fork reversal (RFR). RuvA specifically binds to HJ cruciform DNA, conferring on it an open structure. The RuvB hexamer acts as an ATP-dependent pump, pulling dsDNA into and through the RuvAB complex. RuvB forms 2 homohexamers on either side of HJ DNA bound by 1 or 2 RuvA tetramers; 4 subunits per hexamer contact DNA at a time. Coordinated motions by a converter formed by DNA-disengaged RuvB subunits stimulates ATP hydrolysis and nucleotide exchange. Immobilization of the converter enables RuvB to convert the ATP-contained energy into a lever motion, pulling 2 nucleotides of DNA out of the RuvA tetramer per ATP hydrolyzed, thus driving DNA branch migration. The RuvB motors rotate together with the DNA substrate, which together with the progressing nucleotide cycle form the mechanistic basis for DNA recombination by continuous HJ branch migration. Branch migration allows RuvC to scan DNA until it finds its consensus sequence, where it cleaves and resolves cruciform DNA. The protein is Holliday junction branch migration complex subunit RuvB of Caldanaerobacter subterraneus subsp. tengcongensis (strain DSM 15242 / JCM 11007 / NBRC 100824 / MB4) (Thermoanaerobacter tengcongensis).